A 619-amino-acid chain; its full sequence is Probable pectinesterase/pectinesterase inhibitor 25 (619 aa).

The first 23 residues, 1-23, serve as a signal peptide directing secretion; the sequence is MKMQTLNFTSSLLFLSFIFLSCA. The disordered stretch occupies residues 31 to 84; it reads SPSQPHSEPPSQLPFEPPVESPFFPPSQPPIFVPPSQPPSLPPSQSQSPSLACK. Residues 37–72 are compositionally biased toward pro residues; that stretch reads SEPPSQLPFEPPVESPFFPPSQPPIFVPPSQPPSLP. The segment at 73–231 is pectinesterase inhibitor 25; sequence PSQSQSPSLA…TRLYSISLGL (159 aa). N-linked (GlcNAc...) asparagine glycans are attached at residues N220, N255, N312, N325, and N364. Residues 302–601 are pectinesterase 25; sequence AVIVGPFKSD…FTVYNFTMGD (300 aa). Substrate is bound at residue T380. N-linked (GlcNAc...) asparagine glycosylation occurs at N382. Q410 is a substrate binding site. The Proton donor; for pectinesterase activity role is filled by D433. A disulfide bridge links C447 with C467. D454 (nucleophile; for pectinesterase activity) is an active-site residue. N500 is a glycosylation site (N-linked (GlcNAc...) asparagine). Substrate-binding residues include R522 and W524. 3 N-linked (GlcNAc...) asparagine glycosylation sites follow: N550, N591, and N596.

In the N-terminal section; belongs to the PMEI family. This sequence in the C-terminal section; belongs to the pectinesterase family. Expressed in siliques.

It localises to the secreted. The protein localises to the cell wall. The enzyme catalyses [(1-&gt;4)-alpha-D-galacturonosyl methyl ester](n) + n H2O = [(1-&gt;4)-alpha-D-galacturonosyl](n) + n methanol + n H(+). The protein operates within glycan metabolism; pectin degradation; 2-dehydro-3-deoxy-D-gluconate from pectin: step 1/5. Acts in the modification of cell walls via demethylesterification of cell wall pectin. The protein is Probable pectinesterase/pectinesterase inhibitor 25 (PME25) of Arabidopsis thaliana (Mouse-ear cress).